The following is a 342-amino-acid chain: Isopentenyl-diphosphate delta-isomerase (342 aa).

Residue 11 to 12 (RK) coordinates substrate. FMN contacts are provided by residues serine 68, 69–71 (SMT), serine 99, and asparagine 127. 99 to 101 (SMR) serves as a coordination point for substrate. Glutamine 162 is a substrate binding site. Glutamate 163 is a Mg(2+) binding site. FMN is bound by residues lysine 194, threonine 224, 274 to 276 (GLK), and 295 to 296 (AG).

It belongs to the IPP isomerase type 2 family. As to quaternary structure, homooctamer. Dimer of tetramers. FMN is required as a cofactor. Requires NADPH as cofactor. Mg(2+) serves as cofactor.

It is found in the cytoplasm. The catalysed reaction is isopentenyl diphosphate = dimethylallyl diphosphate. Functionally, involved in the biosynthesis of isoprenoids. Catalyzes the 1,3-allylic rearrangement of the homoallylic substrate isopentenyl (IPP) to its allylic isomer, dimethylallyl diphosphate (DMAPP). The polypeptide is Isopentenyl-diphosphate delta-isomerase (Rickettsia canadensis (strain McKiel)).